A 294-amino-acid polypeptide reads, in one-letter code: ATP synthase gamma chain (294 aa).

Belongs to the ATPase gamma chain family. F-type ATPases have 2 components, CF(1) - the catalytic core - and CF(0) - the membrane proton channel. CF(1) has five subunits: alpha(3), beta(3), gamma(1), delta(1), epsilon(1). CF(0) has three main subunits: a, b and c.

Its subcellular location is the cell inner membrane. Its function is as follows. Produces ATP from ADP in the presence of a proton gradient across the membrane. The gamma chain is believed to be important in regulating ATPase activity and the flow of protons through the CF(0) complex. The sequence is that of ATP synthase gamma chain from Nitratiruptor sp. (strain SB155-2).